Here is a 484-residue protein sequence, read N- to C-terminus: Ribosome biogenesis protein NOP53 (484 aa).

Disordered stretches follow at residues 1 to 51 (MAAG…WRRL) and 304 to 356 (ESDG…AARK). N-acetylalanine is present on A2. The residue at position 29 (S29) is a Phosphoserine. Basic residues predominate over residues 35 to 49 (RRRRRGPRNKKRGWR). The segment at 148 to 437 (KEELWEKLAK…SELSGSLRTL (290 aa)) is mediates interaction with CDKN2A/isoform tumor suppressor ARF. The residue at position 305 (S305) is a Phosphoserine. Basic and acidic residues predominate over residues 336 to 348 (PEKRMEKKTEQQR). The mediates interaction with human herpesvirus 8 protein ORF16 stretch occupies residues 348–392 (RRREKAARKLRVQQAALRAARLQHQELFRLRGIKAQVARRLAELA). Nucleolar localization signal stretches follow at residues 353-401 (AARK…RRIR) and 402-484 (RLAE…EIQL).

This sequence belongs to the NOP53 family. In terms of assembly, homooligomer. Interacts with PTEN; regulates PTEN phosphorylation and increases its stability. Interacts with RPL11; retains RPL11 into the nucleolus. Interacts with CDKN2A/isoform tumor suppressor ARF; the interaction is direct and promotes ARF nucleoplasmic relocalization and ubiquitin-mediated proteasomal degradation. Interacts with NPM1; the interaction is direct and competitive with MYC. Interacts with NF2 (via FERM domain); the interaction is direct. Interacts with p53/TP53 (via the oligomerization region); the interaction is direct and may prevent the MDM2-mediated proteasomal degradation of p53/TP53. Interacts with RIGI; may regulate RIGI through USP15-mediated 'Lys-63'-linked deubiquitination. Interacts with UBTF. In terms of processing, ubiquitin-mediated proteasomal degradation is regulated by c-JUN. It is associated with relocalization to the nucleoplasm and decreased homooligomerization. Phosphorylated upon DNA damage probably by ATM and DNA-PK; may regulate NOP53 degradation.

Its subcellular location is the nucleus. It is found in the nucleolus. It localises to the nucleoplasm. Its function is as follows. Nucleolar protein which is involved in the integration of the 5S RNP into the ribosomal large subunit during ribosome biogenesis. In ribosome biogenesis, may also play a role in rRNA transcription. Also functions as a nucleolar sensor that regulates the activation of p53/TP53 in response to ribosome biogenesis perturbation, DNA damage and other stress conditions. DNA damage or perturbation of ribosome biogenesis disrupt the interaction between NOP53 and RPL11 allowing RPL11 transport to the nucleoplasm where it can inhibit MDM2 and allow p53/TP53 activation. It may also positively regulate the function of p53/TP53 in cell cycle arrest and apoptosis through direct interaction, preventing its MDM2-dependent ubiquitin-mediated proteasomal degradation. Originally identified as a tumor suppressor, it may also play a role in cell proliferation and apoptosis by positively regulating the stability of PTEN, thereby antagonizing the PI3K-AKT/PKB signaling pathway. May also inhibit cell proliferation and increase apoptosis through its interaction with NF2. May negatively regulate NPM1 by regulating its nucleoplasmic localization, oligomerization and ubiquitin-mediated proteasomal degradation. Thereby, may prevent NPM1 interaction with MYC and negatively regulate transcription mediated by the MYC-NPM1 complex. May also regulate cellular aerobic respiration. In the cellular response to viral infection, may play a role in the attenuation of interferon-beta through the inhibition of RIGI. This chain is Ribosome biogenesis protein NOP53, found in Mus musculus (Mouse).